The primary structure comprises 80 residues: Small ribosomal subunit protein bS16 (80 aa).

Belongs to the bacterial ribosomal protein bS16 family.

This Wigglesworthia glossinidia brevipalpis protein is Small ribosomal subunit protein bS16.